The primary structure comprises 106 residues: UPF0145 protein CPF_0876 (106 aa).

The protein belongs to the UPF0145 family.

The protein is UPF0145 protein CPF_0876 of Clostridium perfringens (strain ATCC 13124 / DSM 756 / JCM 1290 / NCIMB 6125 / NCTC 8237 / Type A).